The primary structure comprises 357 residues: CD4+ T-cell-stimulating antigen (357 aa).

An N-terminal signal peptide occupies residues 1 to 22 (MKKRTFALALSMIIASGVVLGA). Residue cysteine 23 is the site of N-palmitoyl cysteine attachment. Cysteine 23 is lipidated: S-diacylglycerol cysteine.

The protein belongs to the BMP lipoprotein family.

The protein localises to the cell membrane. The sequence is that of CD4+ T-cell-stimulating antigen (tcsA) from Listeria innocua serovar 6a (strain ATCC BAA-680 / CLIP 11262).